The sequence spans 335 residues: Vitamin B12 import system permease protein BtuC (335 aa).

The next 9 membrane-spanning stretches (helical) occupy residues 25-45 (LVVI…IWLW), 67-87 (LAVL…QALF), 95-114 (GLLG…VLLG), 118-140 (LPIW…LLLG), 153-173 (LLVG…AVYF), 200-220 (LVLA…VLNF), 243-263 (VLAI…ISFI), 286-306 (CALA…IALF), and 308-328 (AELP…IWLL).

This sequence belongs to the binding-protein-dependent transport system permease family. FecCD subfamily. In terms of assembly, the complex is composed of two ATP-binding proteins (BtuD), two transmembrane proteins (BtuC) and a solute-binding protein (BtuF).

Its subcellular location is the cell inner membrane. Functionally, part of the ABC transporter complex BtuCDF involved in vitamin B12 import. Involved in the translocation of the substrate across the membrane. This Yersinia enterocolitica serotype O:8 / biotype 1B (strain NCTC 13174 / 8081) protein is Vitamin B12 import system permease protein BtuC.